Reading from the N-terminus, the 125-residue chain is MKPNYSVNTAPKRSDEPIWWGLFGAGGTWFAMITPITVLVLGILVPLGVIDAEAMSYERVSEFATSIIGALFIIGTLALPMWHAMHRVHHGMHDLKFHTGVVGKIACYAFAGLISALAVVFIFMI.

3 helical membrane passes run 30-50 (FAMITPITVLVLGILVPLGVI), 63-83 (FATSIIGALFIIGTLALPMWH), and 105-125 (IACYAFAGLISALAVVFIFMI).

This sequence belongs to the FrdD family. As to quaternary structure, part of an enzyme complex containing four subunits: a flavoprotein (FrdA), an iron-sulfur protein (FrdB), and two hydrophobic anchor proteins (FrdC and FrdD).

The protein localises to the cell inner membrane. Functionally, anchors the catalytic components of the fumarate reductase complex to the cell membrane, binds quinones. The polypeptide is Fumarate reductase subunit D (Vibrio campbellii (strain ATCC BAA-1116)).